The sequence spans 825 residues: Extracellular exo-alpha-L-arabinofuranosidase (825 aa).

A signal peptide spans 1-29 (MSRIRWRYGTAATALLVAAGLVPTATAHA). An alpha-L-arabinofuranose-binding site is contributed by E58. Residues 70 to 215 (AELVQNRSFE…ALDMVSLFPR (146 aa)) form the CBM-cenC domain. Residues C247 and 379–380 (NE) contribute to the alpha-L-arabinofuranose site. E380 acts as the Proton donor/acceptor in catalysis.

It belongs to the glycosyl hydrolase 51 family.

The protein localises to the secreted. The enzyme catalyses Hydrolysis of terminal non-reducing alpha-L-arabinofuranoside residues in alpha-L-arabinosides.. Involved in the degradation of arabinan and is a key enzyme in the complete degradation of the plant cell wall. Catalyzes the cleavage of terminal alpha-L-arabinofuranosyl residues of arabinan present in the arabinofuranosyl polysaccharides or oligosaccharides. It cannot act on other arabinose-containing polysaccharides and arabinoxylo-oligosaccharides. It leaves most of the polymer intact, including most of the main-chain residues and the arabinose side chains. It acts preferentially on the linear alpha-(1-&gt;2)-linked arabinofuranobiosides and alpha-(1-&gt;3)-linked arabinofuranobiosides, and is much less effective on alpha-(1-&gt;5)-linked arabinofuranobiosides. It also hydrolyzes the terminal alpha-(1-&gt;3)-linked arabinofuranotriosides in preference to the alpha-(1-&gt;5)-linked arabinofuranotriosides. The protein is Extracellular exo-alpha-L-arabinofuranosidase of Streptomyces chartreusis.